Consider the following 976-residue polypeptide: Collagen alpha-1(I) chain (976 aa).

Position 1 is a phosphoserine (serine 1). A disordered region spans residues 1–976 (SAGGISVPGP…PGPPGPPGPP (976 aa)). Proline 20, proline 23, proline 26, proline 35, proline 38, proline 41, proline 55, proline 70, proline 76, proline 85, and proline 91 each carry 4-hydroxyproline. A compositionally biased stretch (basic and acidic residues) spans 58–72 (NGDDGEAGKPGRPGE). Lysine 94 is subject to 5-hydroxylysine; alternate. Lysine 94 carries an O-linked (Gal...) hydroxylysine; alternate glycan. A Phosphoserine modification is found at serine 100. Low complexity-rich tracts occupy residues 108–118 (DAGPAGPKGAP) and 132–150 (PGASGPAGARGNDGATGAA). 4-hydroxyproline is present on residues proline 118, proline 132, proline 153, proline 162, proline 165, proline 192, proline 195, proline 207, proline 213, proline 222, proline 228, proline 231, and proline 246. Residues 152 to 164 (PPGPTGPAGPPGF) are compositionally biased toward pro residues. Positions 198–237 (AGAAGPAGNPGADGQPGAKGANGAPGIAGAPGFPGARGPS) are enriched in low complexity. Lysine 249 bears the 5-hydroxylysine mark. Proline 255, proline 258, proline 266, proline 275, proline 290, proline 296, proline 304, and proline 310 each carry 4-hydroxyproline. Gly residues predominate over residues 294-308 (GLPGPGERGGPGSRG). The residue at position 319 (lysine 319) is a 5-hydroxylysine. A 4-hydroxyproline mark is found at proline 328, proline 337, proline 343, proline 349, proline 358, proline 361, proline 370, proline 379, proline 385, proline 397, proline 406, proline 415, proline 418, proline 436, proline 453, proline 459, proline 465, proline 471, proline 477, proline 483, proline 495, proline 504, proline 517, proline 523, and proline 532. Residues 352–378 (KGLTGSPGSPGPDGKTGPPGPAGQDGR) are compositionally biased toward low complexity. Residues 387–406 (ARGQAGVMGFPGPKGAAGEP) show a composition bias toward low complexity. Residues 465–474 (PGEAGKPGEQ) show a composition bias toward low complexity. The residue at position 544 (lysine 544) is a 5-hydroxylysine. 3 positions are modified to 4-hydroxyproline: proline 550, proline 565, and proline 571. A compositionally biased stretch (low complexity) spans 577–591 (SGPSGPAGPTGARGA). The residue at position 580 (serine 580) is a Phosphoserine. 4-hydroxyproline occurs at positions 592, 598, 601, 610, 616, 634, 643, and 652. The span at 604–631 (AGFAGPPGADGQPGAKGEPGDAGAKGDA) shows a compositional bias: low complexity. 5-hydroxylysine is present on lysine 655. Residues 660 to 676 (SAGPPGATGFPGAAGRV) show a composition bias toward low complexity. 2 positions are modified to 4-hydroxyproline: proline 664 and proline 670. The residue at position 678 (proline 678) is a 3-hydroxyproline. Residues proline 679, proline 688, proline 691, proline 718, proline 726, proline 735, proline 753, proline 762, proline 765, proline 771, proline 786, proline 792, proline 798, proline 806, and proline 812 each carry the 4-hydroxyproline modification. The span at 723 to 735 (KGSPGADGPAGAP) shows a compositional bias: low complexity. Residues 785–795 (PPGPMGPPGLA) show a composition bias toward pro residues. Lysine 821 carries the 5-hydroxylysine modification. Positions 829–844 (PGPPGAPGAPGAPGPV) are enriched in pro residues. Proline 832, proline 835, and proline 838 each carry 4-hydroxyproline. The span at 864-878 (AGPAGARGPAGPQGP) shows a compositional bias: low complexity. Positions 879-893 (RGDKGETGEQGDRGI) are enriched in basic and acidic residues. Residue lysine 882 is modified to 5-hydroxylysine. Lysine 894 carries the post-translational modification 5-hydroxylysine; alternate. A glycan (O-linked (Gal...) hydroxylysine; alternate) is linked at lysine 894. 4-hydroxyproline is present on residues proline 907, proline 910, proline 928, and proline 943. Over residues 910-943 (PGEQGPSGASGPAGPRGPPGSAGSPGKDGLNGLP) the composition is skewed to low complexity. At proline 948 the chain carries 3-hydroxyproline. Position 949 is a 4-hydroxyproline (proline 949). Positions 961–976 (VGPPGPPGPPGPPGPP) are enriched in pro residues. A 3-hydroxyproline modification is found at proline 963. The residue at position 964 (proline 964) is a 4-hydroxyproline. The residue at position 966 (proline 966) is a 3-hydroxyproline. Proline 967 carries the post-translational modification 4-hydroxyproline. Proline 969 bears the 3-hydroxyproline mark. Proline 970, proline 973, and proline 976 each carry 4-hydroxyproline.

It belongs to the fibrillar collagen family. Trimers of one alpha 2(I) and two alpha 1(I) chains. Post-translationally, contains mostly 4-hydroxyproline. Proline residues at the third position of the tripeptide repeating unit (G-X-Y) are hydroxylated in some or all of the chains. Contains 3-hydroxyproline at a few sites. This modification occurs on the first proline residue in the sequence motif Gly-Pro-Hyp, where Hyp is 4-hydroxyproline. In terms of processing, lysine residues at the third position of the tripeptide repeating unit (G-X-Y) are 5-hydroxylated in some or all of the chains. Post-translationally, O-glycosylated on hydroxylated lysine residues. The O-linked glycan consists of a Glc-Gal disaccharide. As to expression, expressed in bones.

The protein localises to the secreted. It is found in the extracellular space. The protein resides in the extracellular matrix. Functionally, type I collagen is a member of group I collagen (fibrillar forming collagen). The chain is Collagen alpha-1(I) chain from Acratocnus ye (Hispaniolan ground sloth).